We begin with the raw amino-acid sequence, 1307 residues long: Cellulose synthase 2 operon protein C (1307 aa).

A signal peptide spans 1 to 55 (MTRPRGPAPRDGAAWRRDPARRVLLRDAVRGREGGLRLACAVMAGLIVSGGVACA). 9 TPR repeats span residues 97-130 (LELL…EPDN), 270-303 (LDGL…EPIT), 339-372 (AAND…DPHD), 374-406 (DALG…GPDA), 458-491 (LTVL…APRD), 493-525 (GALF…APAM), 528-561 (RLEA…DPDD), 754-787 (IGLA…HPDS), and 788-821 (VEAH…KPAN).

Belongs to the AcsC/BcsC family.

It localises to the cell outer membrane. It participates in glycan metabolism; bacterial cellulose biosynthesis. In terms of biological role, required for maximal bacterial cellulose synthesis. The polypeptide is Cellulose synthase 2 operon protein C (bcsCII) (Komagataeibacter xylinus (Gluconacetobacter xylinus)).